A 186-amino-acid polypeptide reads, in one-letter code: Dynactin subunit 3 (186 aa).

At Ala-2 the chain carries N-acetylalanine. Residues 46 to 66 (NIASKRERVKILYKKIEDLIK) are a coiled coil.

The protein belongs to the dynactin subunit 3 family. Subunit of dynactin, a multiprotein complex part of a tripartite complex with dynein and a adapter, such as BICDL1, BICD2 or HOOK3. The dynactin complex is built around ACTR1A/ACTB filament and consists of an actin-related filament composed of a shoulder domain, a pointed end and a barbed end. Its length is defined by its flexible shoulder domain. The soulder is composed of 2 DCTN1 subunits, 4 DCTN2 and 2 DCTN3. The 4 DCNT2 (via N-terminus) bind the ACTR1A filament and act as molecular rulers to determine the length. The pointed end is important for binding dynein-dynactin cargo adapters. Consists of 4 subunits: ACTR10, DCNT4, DCTN5 and DCTN6. The barbed end is composed of a CAPZA1:CAPZB heterodimers, which binds ACTR1A/ACTB filament and dynactin and stabilizes dynactin.

The protein localises to the cytoplasm. It localises to the cytoskeleton. Its subcellular location is the microtubule organizing center. It is found in the centrosome. The protein resides in the chromosome. The protein localises to the centromere. It localises to the kinetochore. Its subcellular location is the spindle. It is found in the cleavage furrow. The protein resides in the midbody. Functionally, part of the dynactin complex that activates the molecular motor dynein for ultra-processive transport along microtubules. Together with dynein may be involved in spindle assembly and cytokinesis. The sequence is that of Dynactin subunit 3 from Mus musculus (Mouse).